A 276-amino-acid polypeptide reads, in one-letter code: Diaminopimelate epimerase (276 aa).

The substrate site is built by asparagine 13, glutamine 46, and asparagine 66. Cysteine 75 (proton donor) is an active-site residue. Substrate contacts are provided by residues 76–77 (GN), asparagine 159, asparagine 192, and 210–211 (ER). Cysteine 219 serves as the catalytic Proton acceptor. Substrate is bound at residue 220-221 (GT).

It belongs to the diaminopimelate epimerase family. In terms of assembly, homodimer.

It is found in the cytoplasm. The catalysed reaction is (2S,6S)-2,6-diaminopimelate = meso-2,6-diaminopimelate. It participates in amino-acid biosynthesis; L-lysine biosynthesis via DAP pathway; DL-2,6-diaminopimelate from LL-2,6-diaminopimelate: step 1/1. In terms of biological role, catalyzes the stereoinversion of LL-2,6-diaminopimelate (L,L-DAP) to meso-diaminopimelate (meso-DAP), a precursor of L-lysine and an essential component of the bacterial peptidoglycan. This is Diaminopimelate epimerase from Pseudoalteromonas translucida (strain TAC 125).